A 960-amino-acid chain; its full sequence is Putative helicase L207/L206 (960 aa).

Residues 1 to 32 form a disordered region; sequence MTSKTENKKSVSSKTGRTTNNSTNKKTTEKSV. A compositionally biased stretch (low complexity) spans 12–25; that stretch reads SSKTGRTTNNSTNK. One can recognise an SF3 helicase domain in the interval 646 to 807; it reads SMREYILTLL…FIKHSEATKK (162 aa).

The protein is Putative helicase L207/L206 of Acanthamoeba polyphaga mimivirus (APMV).